We begin with the raw amino-acid sequence, 315 residues long: Homoserine kinase (315 aa).

ATP is bound at residue 97-107 (PPARGLGSSAT).

This sequence belongs to the GHMP kinase family. Homoserine kinase subfamily.

It is found in the cytoplasm. It catalyses the reaction L-homoserine + ATP = O-phospho-L-homoserine + ADP + H(+). Its pathway is amino-acid biosynthesis; L-threonine biosynthesis; L-threonine from L-aspartate: step 4/5. In terms of biological role, catalyzes the ATP-dependent phosphorylation of L-homoserine to L-homoserine phosphate. In Synechococcus sp. (strain CC9605), this protein is Homoserine kinase.